The primary structure comprises 557 residues: Urocanate hydratase (557 aa).

NAD(+) is bound by residues 53–54 (GG), Gln-131, 177–179 (GMG), Glu-197, Arg-202, 243–244 (NA), 264–268 (QTSAH), 274–275 (YL), and Tyr-323. Residue Cys-411 is part of the active site. Gly-493 lines the NAD(+) pocket.

It belongs to the urocanase family. The cofactor is NAD(+).

It is found in the cytoplasm. It catalyses the reaction 4-imidazolone-5-propanoate = trans-urocanate + H2O. The protein operates within amino-acid degradation; L-histidine degradation into L-glutamate; N-formimidoyl-L-glutamate from L-histidine: step 2/3. Its function is as follows. Catalyzes the conversion of urocanate to 4-imidazolone-5-propionate. In Pseudomonas putida (strain GB-1), this protein is Urocanate hydratase.